The primary structure comprises 703 residues: Fanconi-associated nuclease 1 homolog (703 aa).

Residues Glu-529, Asp-651, Glu-666, and Val-667 each contribute to the Mn(2+) site. The region spanning 597–698 (YIREHQRKTF…EVDVEVCHVS (102 aa)) is the VRR-NUC domain.

The protein belongs to the FAN1 family. Requires Mn(2+) as cofactor. The cofactor is Mg(2+).

It localises to the nucleus. The enzyme catalyses Hydrolytically removes 5'-nucleotides successively from the 3'-hydroxy termini of 3'-hydroxy-terminated oligonucleotides.. Nuclease required for the repair of DNA interstrand cross-links (ICL). Acts as a 5'-3' exonuclease that anchors at a cut end of DNA and cleaves DNA successively at every third nucleotide, allowing to excise an ICL from one strand through flanking incisions. The protein is Fanconi-associated nuclease 1 homolog of Schizosaccharomyces pombe (strain 972 / ATCC 24843) (Fission yeast).